A 557-amino-acid polypeptide reads, in one-letter code: MTKYVFVTGGVVSSLGKGIAAASLAAILESRGLKVTLLKLDPYINVDPGTMSPFQHGEVFVTEDGAETDLDLGHYERFISTKMRKANNFTTGQIYESVIRKERRGDYLGKTVQVIPHITNEIQAFIERGAASATCGEPDVAIVEVGGTVGDIESLPFLEAARQMSLRMGRNSACFVHLTLVPWVATAGELKTKPTQHSVQKLREIGISPHVLLCRADRRIPDDERAKISMFSNVPEDAVISVWDADSIYKIPQMLHDQGLDAIICEELKLEPKAADLSMWSDLVEKLEHPRHEVTIGMVGKYVDLTESYKSLIEALRHASMHTSTKVNIEYIDSEEIETHGVESLKHLDAVLVPGGFGRRGTEGKIAAIRYAREAKVPYLGICLGMQLAVIEFARDVVGLKDANSTEFDQETPNRVVALITEWYDREGRVEKRTEESDLGGTMRLGSQRCPIKPGTMAEEIYGKDVNERHRHRYEVNNRFVPQLEAGGLIISARTPSEDLPEMMELPRSMHPWFVGVQFHPEFTSTPRDGHPLFKSFVEAALAHQQSRTAAEVGEKA.

An amidoligase domain region spans residues 1-270; it reads MTKYVFVTGG…DAIICEELKL (270 aa). Ser13 is a binding site for CTP. Ser13 contributes to the UTP binding site. Residues 14-19 and Asp71 each bind ATP; that span reads SLGKGI. Positions 71 and 144 each coordinate Mg(2+). Residues 151–153, 191–196, and Lys227 contribute to the CTP site; these read DIE and KTKPTQ. UTP-binding positions include 191-196 and Lys227; that span reads KTKPTQ. In terms of domain architecture, Glutamine amidotransferase type-1 spans 295–547; the sequence is TIGMVGKYVD…VEAALAHQQS (253 aa). Gly356 contributes to the L-glutamine binding site. Residue Cys383 is the Nucleophile; for glutamine hydrolysis of the active site. L-glutamine contacts are provided by residues 384 to 387, Glu407, and Arg473; that span reads LGMQ. Catalysis depends on residues His520 and Glu522.

This sequence belongs to the CTP synthase family. In terms of assembly, homotetramer.

The enzyme catalyses UTP + L-glutamine + ATP + H2O = CTP + L-glutamate + ADP + phosphate + 2 H(+). The catalysed reaction is L-glutamine + H2O = L-glutamate + NH4(+). It carries out the reaction UTP + NH4(+) + ATP = CTP + ADP + phosphate + 2 H(+). It functions in the pathway pyrimidine metabolism; CTP biosynthesis via de novo pathway; CTP from UDP: step 2/2. Allosterically activated by GTP, when glutamine is the substrate; GTP has no effect on the reaction when ammonia is the substrate. The allosteric effector GTP functions by stabilizing the protein conformation that binds the tetrahedral intermediate(s) formed during glutamine hydrolysis. Inhibited by the product CTP, via allosteric rather than competitive inhibition. In terms of biological role, catalyzes the ATP-dependent amination of UTP to CTP with either L-glutamine or ammonia as the source of nitrogen. Regulates intracellular CTP levels through interactions with the four ribonucleotide triphosphates. The chain is CTP synthase from Paraburkholderia xenovorans (strain LB400).